A 367-amino-acid chain; its full sequence is Protein RecA (367 aa).

73–80 (GPESSGKT) serves as a coordination point for ATP. The interval 345–367 (DEPVAKKASAKESKEAKELKEVE) is disordered.

The protein belongs to the RecA family.

The protein resides in the cytoplasm. Its function is as follows. Can catalyze the hydrolysis of ATP in the presence of single-stranded DNA, the ATP-dependent uptake of single-stranded DNA by duplex DNA, and the ATP-dependent hybridization of homologous single-stranded DNAs. It interacts with LexA causing its activation and leading to its autocatalytic cleavage. The protein is Protein RecA of Janthinobacterium sp. (strain Marseille) (Minibacterium massiliensis).